The primary structure comprises 256 residues: Ciliary microtubule associated protein 1A (256 aa).

STPGR repeat units lie at residues 66–92, 181–206, and 217–242; these read PGPG…IYGR, PGPG…MTAR, and PGPG…FGIR. A disordered region spans residues 91–115; it reads GRPRDISSFRTPGPGSYSPERAGKS.

Belongs to the CIMAP family.

The protein resides in the cytoplasm. It localises to the cytoskeleton. It is found in the flagellum axoneme. Outer dense fibers are filamentous structures located on the outside of the axoneme in the midpiece and principal piece of the mammalian sperm tail. May help to maintain the passive elastic structures and elastic recoil of the sperm tail. In Xenopus laevis (African clawed frog), this protein is Ciliary microtubule associated protein 1A (cimap1a).